Reading from the N-terminus, the 232-residue chain is MTDDTRAVVLASGGMDSATAAYEAQTRGYDHLYLLHTSYGQNTEDREYECASALADHVDAADFLHVETGHLTQIGASSLTDDSMEVADADTDSDEIPTSYVPFRNANLLSMAVSYAEANDCGAVFIGAHSEDFSGYPDCRPAFFDAFQGVIDAGTKPDTDIALVAPFVEWSKTDIAERGVELGVPYADTWSCYRDDEPACGTCDACAFRLEAFQRIGERDPIEYAERPTYAE.

11–21 (ASGGMDSATAA) lines the ATP pocket. Cys-192, Cys-200, Cys-203, and Cys-206 together coordinate Zn(2+).

The protein belongs to the QueC family. Zn(2+) is required as a cofactor.

It carries out the reaction 7-carboxy-7-deazaguanine + NH4(+) + ATP = 7-cyano-7-deazaguanine + ADP + phosphate + H2O + H(+). It functions in the pathway purine metabolism; 7-cyano-7-deazaguanine biosynthesis. Catalyzes the ATP-dependent conversion of 7-carboxy-7-deazaguanine (CDG) to 7-cyano-7-deazaguanine (preQ(0)). The chain is 7-cyano-7-deazaguanine synthase from Haloarcula marismortui (strain ATCC 43049 / DSM 3752 / JCM 8966 / VKM B-1809) (Halobacterium marismortui).